The primary structure comprises 122 residues: S-adenosylmethionine decarboxylase proenzyme (122 aa).

The active-site Schiff-base intermediate with substrate; via pyruvic acid is S63. S63 carries the pyruvic acid (Ser); by autocatalysis modification. The Proton acceptor; for processing activity role is filled by H68. C83 serves as the catalytic Proton donor; for catalytic activity.

Belongs to the prokaryotic AdoMetDC family. Type 1 subfamily. Heterotetramer of two alpha and two beta chains arranged as a dimer of alpha/beta heterodimers. Pyruvate is required as a cofactor. Is synthesized initially as an inactive proenzyme. Formation of the active enzyme involves a self-maturation process in which the active site pyruvoyl group is generated from an internal serine residue via an autocatalytic post-translational modification. Two non-identical subunits are generated from the proenzyme in this reaction, and the pyruvate is formed at the N-terminus of the alpha chain, which is derived from the carboxyl end of the proenzyme. The post-translation cleavage follows an unusual pathway, termed non-hydrolytic serinolysis, in which the side chain hydroxyl group of the serine supplies its oxygen atom to form the C-terminus of the beta chain, while the remainder of the serine residue undergoes an oxidative deamination to produce ammonia and the pyruvoyl group blocking the N-terminus of the alpha chain.

The catalysed reaction is S-adenosyl-L-methionine + H(+) = S-adenosyl 3-(methylsulfanyl)propylamine + CO2. The protein operates within amine and polyamine biosynthesis; S-adenosylmethioninamine biosynthesis; S-adenosylmethioninamine from S-adenosyl-L-methionine: step 1/1. Catalyzes the decarboxylation of S-adenosylmethionine to S-adenosylmethioninamine (dcAdoMet), the propylamine donor required for the synthesis of the polyamines spermine and spermidine from the diamine putrescine. This chain is S-adenosylmethionine decarboxylase proenzyme, found in Methanococcus maripaludis (strain DSM 14266 / JCM 13030 / NBRC 101832 / S2 / LL).